Consider the following 318-residue polypeptide: Probable metal transport system membrane protein CT_070 (318 aa).

A run of 10 helical transmembrane segments spans residues 1–21 (MVAS…LVFF), 39–59 (IQVI…TFLV), 64–84 (AMYA…VCLF), 94–114 (QALT…IHFI), 124–144 (ASTA…LVFL), 170–190 (IFLV…SFVC), 196–216 (IFAF…MLLL), 226–246 (AVGV…AKLI), 252–272 (EMMV…PALS), and 285–305 (TSGL…VFVC).

The protein belongs to the ABC-3 integral membrane protein family.

It is found in the cell inner membrane. Part of an ATP-driven transport system CT_067/CT_068/CT_069/CT_070 for a metal. The polypeptide is Probable metal transport system membrane protein CT_070 (Chlamydia trachomatis serovar D (strain ATCC VR-885 / DSM 19411 / UW-3/Cx)).